The primary structure comprises 238 residues: Serine protease SplE (238 aa).

The N-terminal stretch at 1–36 (MNKNIIIKSIAALTILTSVTGVGTTMVEGIQQTAKA) is a signal peptide. Active-site charge relay system residues include H75, D113, and S191.

The protein belongs to the peptidase S1B family.

It is found in the secreted. In Staphylococcus aureus, this protein is Serine protease SplE (splE).